The following is a 65-amino-acid chain: SPbeta prophage-derived uncharacterized protein YorO (65 aa).

In Bacillus subtilis (strain 168), this protein is SPbeta prophage-derived uncharacterized protein YorO (yorO).